A 194-amino-acid chain; its full sequence is uncharacterized protein (194 aa).

A disordered region spans residues 25–156; it reads PSWACRRGGP…ESPLGTLPCS (132 aa). Residues 43–57 are compositionally biased toward polar residues; sequence GPSTVPVTPTAGSCQ. Residues 104-113 show a composition bias toward low complexity; the sequence is SSSPGPSFHL.

This is an uncharacterized protein from Homo sapiens (Human).